A 197-amino-acid polypeptide reads, in one-letter code: HTH-type transcriptional regulator BetI (197 aa).

The 61-residue stretch at 8 to 68 folds into the HTH tetR-type domain; that stretch reads PIRRQQLIEA…ATMRYLMNAL (61 aa). The segment at residues 31–50 is a DNA-binding region (H-T-H motif); sequence SIALIARLAGVSNGIISHYF.

It functions in the pathway amine and polyamine biosynthesis; betaine biosynthesis via choline pathway [regulation]. Repressor involved in the biosynthesis of the osmoprotectant glycine betaine. It represses transcription of the choline transporter BetT and the genes of BetAB involved in the synthesis of glycine betaine. This is HTH-type transcriptional regulator BetI from Pseudomonas fluorescens (strain SBW25).